The sequence spans 154 residues: Insulin-like growth factor 1 (154 aa).

Positions 50–78 are b; sequence GPETLCGAELVDALQFVCGDRGFYFNKPT. 3 disulfides stabilise this stretch: Cys55–Cys97, Cys67–Cys110, and Cys96–Cys101. The tract at residues 79–90 is c; the sequence is GYGSSSRRAPQT. The segment at 91 to 111 is a; it reads GIVDECCFRSCDLRRLEMYCA. Residues 112-119 form a d region; the sequence is PLKAAKSA. The propeptide at 120 to 154 is e peptide; it reads RSVRAQRHTDMPKAQKEVHLKNTSRGSAGNKNYRM. The tract at residues 121-154 is disordered; the sequence is SVRAQRHTDMPKAQKEVHLKNTSRGSAGNKNYRM. The segment covering 126-139 has biased composition (basic and acidic residues); sequence RHTDMPKAQKEVHL. Over residues 140–154 the composition is skewed to polar residues; that stretch reads KNTSRGSAGNKNYRM.

Belongs to the insulin family. As to quaternary structure, forms a ternary complex with IGFR1 and ITGAV:ITGB3. Forms a ternary complex with IGFR1 and ITGA6:ITGB4. Forms a ternary complex with IGFBP3 and ALS.

The protein resides in the secreted. In terms of biological role, the insulin-like growth factors, isolated from plasma, are structurally and functionally related to insulin but have a much higher growth-promoting activity. May be a physiological regulator of [1-14C]-2-deoxy-D-glucose (2DG) transport and glycogen synthesis in osteoblasts. Stimulates glucose transport in bone-derived osteoblastic (PyMS) cells and is effective at much lower concentrations than insulin, not only regarding glycogen and DNA synthesis but also with regard to enhancing glucose uptake. May play a role in synapse maturation. Ca(2+)-dependent exocytosis of IGF1 is required for sensory perception of smell in the olfactory bulb. Acts as a ligand for IGF1R. Binds to the alpha subunit of IGF1R, leading to the activation of the intrinsic tyrosine kinase activity which autophosphorylates tyrosine residues in the beta subunit thus initiating a cascade of down-stream signaling events leading to activation of the PI3K-AKT/PKB and the Ras-MAPK pathways. Binds to integrins ITGAV:ITGB3 and ITGA6:ITGB4. Its binding to integrins and subsequent ternary complex formation with integrins and IGFR1 are essential for IGF1 signaling. Induces the phosphorylation and activation of IGFR1, MAPK3/ERK1, MAPK1/ERK2 and AKT1. As part of the MAPK/ERK signaling pathway, acts as a negative regulator of apoptosis in cardiomyocytes via promotion of STUB1/CHIP-mediated ubiquitination and degradation of ICER-type isoforms of CREM. This Ovis aries (Sheep) protein is Insulin-like growth factor 1.